Consider the following 89-residue polypeptide: Large ribosomal subunit protein bL27 (89 aa).

A disordered region spans residues 1–22 (MAHKKAGGSSRNGRDSAGRRLG).

Belongs to the bacterial ribosomal protein bL27 family.

The protein is Large ribosomal subunit protein bL27 of Dinoroseobacter shibae (strain DSM 16493 / NCIMB 14021 / DFL 12).